A 20-amino-acid chain; its full sequence is Agglutinin beta-3 chain (20 aa).

The segment at 1–20 is disordered; the sequence is GPNGKSQSIIVGPWGDRVTN.

Belongs to the jacalin lectin family. In terms of assembly, formed of four alpha chains and four beta chains.

Its function is as follows. D-galactose-specific lectin, binds the T-antigen structure Gal-beta1,3-GalNAc. This chain is Agglutinin beta-3 chain, found in Maclura pomifera (Osage orange).